The primary structure comprises 61 residues: Large ribosomal subunit protein bL28 (61 aa).

The protein belongs to the bacterial ribosomal protein bL28 family.

The sequence is that of Large ribosomal subunit protein bL28 from Geobacillus thermodenitrificans (strain NG80-2).